We begin with the raw amino-acid sequence, 326 residues long: Glycine N(alpha)-acyltransferase (326 aa).

Belongs to the acetyltransferase family.

It catalyses the reaction a (3R)-hydroxyacyl-[ACP] + glycine = a lyso-glycine lipid + holo-[ACP] + H(+). The catalysed reaction is (3R)-hydroxyhexadecanoyl-[ACP] + glycine = N-[(3R)-3-hydroxyhexadecanoyl]-glycine + holo-[ACP] + H(+). It participates in lipid metabolism. Its function is as follows. Is involved in the production of glycine lipids (GL), which are phosphorus-free membrane lipids. Catalyzes the first step of GL biosynthesis, i.e. the N-acylation of glycine via addition of a 3-hydroxy fatty acyl group, to form a range of monoacylated glycine (also named lyso-glycine lipids or lyso-GL). As an example, catalyzes the production of commendamide, an N-acylated (3-OH C16:0) derivative of glycine with hemolytic activity and the ability to solubilize cholesterol micelles; this compound can also activate NF-kB through the G-protein coupled receptor GPCR G2A/132. The polypeptide is Glycine N(alpha)-acyltransferase (Phocaeicola vulgatus (strain ATCC 8482 / DSM 1447 / JCM 5826 / CCUG 4940 / NBRC 14291 / NCTC 11154) (Bacteroides vulgatus)).